A 238-amino-acid polypeptide reads, in one-letter code: Leucyl/phenylalanyl-tRNA--protein transferase (238 aa).

This sequence belongs to the L/F-transferase family.

The protein localises to the cytoplasm. The enzyme catalyses N-terminal L-lysyl-[protein] + L-leucyl-tRNA(Leu) = N-terminal L-leucyl-L-lysyl-[protein] + tRNA(Leu) + H(+). The catalysed reaction is N-terminal L-arginyl-[protein] + L-leucyl-tRNA(Leu) = N-terminal L-leucyl-L-arginyl-[protein] + tRNA(Leu) + H(+). It carries out the reaction L-phenylalanyl-tRNA(Phe) + an N-terminal L-alpha-aminoacyl-[protein] = an N-terminal L-phenylalanyl-L-alpha-aminoacyl-[protein] + tRNA(Phe). Functions in the N-end rule pathway of protein degradation where it conjugates Leu, Phe and, less efficiently, Met from aminoacyl-tRNAs to the N-termini of proteins containing an N-terminal arginine or lysine. In Psychromonas ingrahamii (strain DSM 17664 / CCUG 51855 / 37), this protein is Leucyl/phenylalanyl-tRNA--protein transferase.